Consider the following 132-residue polypeptide: MDVTRLLLATLLVFLCFFTAYSHPPPEEKLRDDRSLRSNSSVNLLDFPSVSIMALNKNSKQISRKEAEKKRSSKKEASMKKVARPRTPLSAPCVATRDSCKPPAPACCDPCASCQCRFFRSACSCRVLSLNC.

The first 22 residues, 1–22 (MDVTRLLLATLLVFLCFFTAYS), serve as a signal peptide directing secretion. Asn39 is a glycosylation site (N-linked (GlcNAc...) asparagine). The tract at residues 60–88 (KQISRKEAEKKRSSKKEASMKKVARPRTP) is disordered. Over residues 63-79 (SRKEAEKKRSSKKEASM) the composition is skewed to basic and acidic residues. 5 disulfides stabilise this stretch: Cys93/Cys108, Cys100/Cys114, Cys107/Cys125, Cys111/Cys132, and Cys116/Cys123. In terms of domain architecture, Agouti spans 93-132 (CVATRDSCKPPAPACCDPCASCQCRFFRSACSCRVLSLNC).

The protein localises to the secreted. Its function is as follows. Involved in the regulation of melanogenesis. The binding of ASP to MC1R precludes alpha-MSH initiated signaling and thus blocks production of cAMP, leading to a down-regulation of eumelanogenesis (brown/black pigment) and thus increasing synthesis of pheomelanin (yellow/red pigment). The polypeptide is Agouti-signaling protein (ASIP) (Macaca cyclopis (Taiwan macaque)).